A 119-amino-acid polypeptide reads, in one-letter code: Ribonuclease P protein component (119 aa).

This sequence belongs to the RnpA family. As to quaternary structure, consists of a catalytic RNA component (M1 or rnpB) and a protein subunit.

The enzyme catalyses Endonucleolytic cleavage of RNA, removing 5'-extranucleotides from tRNA precursor.. In terms of biological role, RNaseP catalyzes the removal of the 5'-leader sequence from pre-tRNA to produce the mature 5'-terminus. It can also cleave other RNA substrates such as 4.5S RNA. The protein component plays an auxiliary but essential role in vivo by binding to the 5'-leader sequence and broadening the substrate specificity of the ribozyme. The polypeptide is Ribonuclease P protein component (Shewanella woodyi (strain ATCC 51908 / MS32)).